The following is a 121-amino-acid chain: DLWQFNKMIKKEVGKLPFPFYGAYGCYCGWGGRGEKPKDGTDRCCFVHDCCYKKLTGCPKWDDRYSYSWKDITIVCGEDLPCEEICECDRAAAVCFYENLGTYNKKYMKHLKPCKKADYPC.

Cystine bridges form between Cys-26–Cys-114, Cys-28–Cys-45, Cys-44–Cys-95, Cys-50–Cys-121, Cys-51–Cys-88, Cys-58–Cys-82, and Cys-76–Cys-86. Positions 27, 29, and 31 each coordinate Ca(2+). Residue His-48 is part of the active site. Position 49 (Asp-49) interacts with Ca(2+). The active site involves Asp-89.

Ca(2+) serves as cofactor. In terms of tissue distribution, expressed by the venom gland.

The protein localises to the secreted. The enzyme catalyses a 1,2-diacyl-sn-glycero-3-phosphocholine + H2O = a 1-acyl-sn-glycero-3-phosphocholine + a fatty acid + H(+). Inhibited by magnesium, cadmium and manganese ions. Also inhibited by crotapotin. Functionally, snake venom phospholipase A2 (PLA2) that shows enzymatic activity in the presence of a synthetic substrate. In vitro, blocks the neuromuscular transmission in young chick biventer cervicis preparations. In mice, induces myonecrosis and a systemic interleukin-6 response upon intramuscular injection. Also induces edema and exerts a strong pro-inflammatory effect. PLA2 catalyzes the calcium-dependent hydrolysis of the 2-acyl groups in 3-sn-phosphoglycerides. In Bothrops moojeni (Lance-headed viper), this protein is Basic phospholipase A2 BmTX-I.